The sequence spans 157 residues: Regenerating islet-derived protein 4 (157 aa).

A signal peptide spans 1–22 (MASKCVRLLLLLSWVAGPEVLS). Cysteines 29 and 40 form a disulfide. The C-type lectin domain occupies 36–154 (YRSHCYGYFR…CTKRQHFLCK (119 aa)). 3 N-linked (GlcNAc...) asparagine glycosylation sites follow: asparagine 49, asparagine 62, and asparagine 101. 2 cysteine pairs are disulfide-bonded: cysteine 57/cysteine 153 and cysteine 128/cysteine 145. A carbohydrate is bound by residues 97–101 (DPQKN) and 134–136 (KDK).

The protein localises to the secreted. Calcium-independent lectin displaying mannose-binding specificity and able to maintain carbohydrate recognition activity in an acidic environment. May be involved in inflammatory and metaplastic responses of the gastrointestinal epithelium. The sequence is that of Regenerating islet-derived protein 4 (Reg4) from Rattus norvegicus (Rat).